The chain runs to 689 residues: Long-chain fatty acid transport protein 5 (689 aa).

Over 1-29 the chain is Cytoplasmic; it reads MGIWKKLTLLLLLLLLVGLGQPPWPAAMA. A run of 2 helical transmembrane segments spans residues 30-50 and 55-75; these read LALRWFLGDPTCLVLLGLALL and ISSWMPHWLSLVGAALTLFLL. The Cytoplasmic portion of the chain corresponds to 76 to 689; it reads PLQPPPGLRW…QAVCEGTWNL (614 aa). Residue 292–303 coordinates AMP; sequence IFTSGTTGLPKP.

This sequence belongs to the ATP-dependent AMP-binding enzyme family. As to expression, liver-specific (at protein level). In liver expressed in a periportal distribution.

It is found in the endoplasmic reticulum membrane. The protein resides in the microsome. Its subcellular location is the cell membrane. The catalysed reaction is a fatty acid(in) = a fatty acid(out). It catalyses the reaction cholate + ATP + CoA = choloyl-CoA + AMP + diphosphate. It carries out the reaction (25R)-3alpha,7alpha,12alpha-trihydroxy-5beta-cholestan-26-oate + ATP + CoA = (25R)-3alpha,7alpha,12alpha-trihydroxy-5beta-cholestan-26-oyl-CoA + AMP + diphosphate. The enzyme catalyses chenodeoxycholate + ATP + CoA = chenodeoxycholoyl-CoA + AMP + diphosphate. The catalysed reaction is deoxycholate + ATP + CoA = deoxycholoyl-CoA + AMP + diphosphate. It catalyses the reaction lithocholate + ATP + CoA = lithocholoyl-CoA + AMP + diphosphate. It carries out the reaction a very long-chain fatty acid + ATP + CoA = a very long-chain fatty acyl-CoA + AMP + diphosphate. The enzyme catalyses tetracosanoate + ATP + CoA = tetracosanoyl-CoA + AMP + diphosphate. The catalysed reaction is hexacosanoate + ATP + CoA = hexacosanoyl-CoA + AMP + diphosphate. It catalyses the reaction a long-chain fatty acid + ATP + CoA = a long-chain fatty acyl-CoA + AMP + diphosphate. It carries out the reaction octadecanoate + ATP + CoA = octadecanoyl-CoA + AMP + diphosphate. The enzyme catalyses eicosanoate + ATP + CoA = eicosanoyl-CoA + AMP + diphosphate. Its function is as follows. Mediates the import of long-chain fatty acids (LCFA) by facilitating their transport across cell membranes. Also catalyzes the ATP-dependent formation of fatty acyl-CoA using LCFA and very-long-chain fatty acids (VLCFA) as substrates. Mainly functions as a bile acyl-CoA synthetase catalyzing the activation of bile acids via ATP-dependent formation of bile acid CoA thioesters which is necessary for their subsequent conjugation with glycine or taurine. Both primary bile acids (cholic acid and chenodeoxycholic acid) and secondary bile acids (deoxycholic acid and lithocholic acid) are the principal substrates. In vitro, activates 3-alpha,7-alpha,12-alpha-trihydroxy-5-beta-cholestanate ((25R)-3alpha,7alpha,12alpha-trihydroxy-5beta-cholestan-26-oate or THCA), the C27 precursor of cholic acid deriving from the de novo synthesis from cholesterol. Plays an important role in hepatic fatty acid uptake and bile acid reconjugation and recycling but not in de novo synthesis of bile acids. This Mus musculus (Mouse) protein is Long-chain fatty acid transport protein 5 (Slc27a5).